Consider the following 443-residue polypeptide: Putative transporter AmpG 1 (443 aa).

13 helical membrane-spanning segments follow: residues 5 to 25 (SHIYIIWLFGFISGFNVMITG), 42 to 62 (IGMLSFITLPYSINFLLAPVF), 78 to 98 (LSWICLTSTTLISLIFILSFL), 104 to 124 (LVLLSFIAFIISFFSAAQDTI), 143 to 163 (GIYILGYRVGMLLASSGAIYL), 171 to 191 (AIYKIFAGVIFVYLILLILVA), 230 to 250 (FNYFKNFISAYLLKIFSGFYF), 254 to 274 (DINLAYYIILILIFLVLYRLP), 299 to 319 (VCKFCGVMGAIIGGLIGGIIM), 324 to 344 (ILYSILLFGIIHALSHIFFIL), 354 to 374 (ILFITIGVESITGGMTMTAYI), 393 to 413 (LSSMMGISRSIFPIISGYMVV), and 415 to 435 (FGWQNFFLFTTIITIPSLLIL).

The protein belongs to the major facilitator superfamily.

It localises to the cell inner membrane. This is Putative transporter AmpG 1 (ampG1) from Rickettsia prowazekii (strain Madrid E).